We begin with the raw amino-acid sequence, 321 residues long: Biotin synthase (321 aa).

The region spanning phenylalanine 45–arginine 274 is the Radical SAM core domain. Cysteine 63, cysteine 67, and cysteine 70 together coordinate [4Fe-4S] cluster. [2Fe-2S] cluster-binding residues include cysteine 139, cysteine 199, and arginine 269.

It belongs to the radical SAM superfamily. Biotin synthase family. In terms of assembly, homodimer. The cofactor is [4Fe-4S] cluster. [2Fe-2S] cluster is required as a cofactor.

It catalyses the reaction (4R,5S)-dethiobiotin + (sulfur carrier)-SH + 2 reduced [2Fe-2S]-[ferredoxin] + 2 S-adenosyl-L-methionine = (sulfur carrier)-H + biotin + 2 5'-deoxyadenosine + 2 L-methionine + 2 oxidized [2Fe-2S]-[ferredoxin]. It functions in the pathway cofactor biosynthesis; biotin biosynthesis; biotin from 7,8-diaminononanoate: step 2/2. Its function is as follows. Catalyzes the conversion of dethiobiotin (DTB) to biotin by the insertion of a sulfur atom into dethiobiotin via a radical-based mechanism. The sequence is that of Biotin synthase from Pelotomaculum thermopropionicum (strain DSM 13744 / JCM 10971 / SI).